The sequence spans 318 residues: Pantothenate kinase (318 aa).

96-103 (GSVAVGKS) provides a ligand contact to ATP.

Belongs to the prokaryotic pantothenate kinase family.

It localises to the cytoplasm. It carries out the reaction (R)-pantothenate + ATP = (R)-4'-phosphopantothenate + ADP + H(+). Its pathway is cofactor biosynthesis; coenzyme A biosynthesis; CoA from (R)-pantothenate: step 1/5. The sequence is that of Pantothenate kinase from Afipia carboxidovorans (strain ATCC 49405 / DSM 1227 / KCTC 32145 / OM5) (Oligotropha carboxidovorans).